The following is a 304-amino-acid chain: tRNA dimethylallyltransferase (304 aa).

2–9 (GPTASGKT) is an ATP binding site. 4 to 9 (TASGKT) contributes to the substrate binding site. Interaction with substrate tRNA regions lie at residues 27 to 30 (DSAL), 151 to 155 (QRINR), 232 to 237 (RCVGYR), and 265 to 272 (KRQITWLR).

It belongs to the IPP transferase family. In terms of assembly, monomer. It depends on Mg(2+) as a cofactor.

It catalyses the reaction adenosine(37) in tRNA + dimethylallyl diphosphate = N(6)-dimethylallyladenosine(37) in tRNA + diphosphate. Functionally, catalyzes the transfer of a dimethylallyl group onto the adenine at position 37 in tRNAs that read codons beginning with uridine, leading to the formation of N6-(dimethylallyl)adenosine (i(6)A). The chain is tRNA dimethylallyltransferase from Actinobacillus pleuropneumoniae serotype 5b (strain L20).